Consider the following 360-residue polypeptide: Glycerol-3-phosphate dehydrogenase [NAD(+)], cytoplasmic (360 aa).

Residues 11–16 (GSGNWG), phenylalanine 98, lysine 121, and alanine 155 contribute to the NAD(+) site. Lysine 121 contributes to the substrate binding site. The Proton acceptor role is filled by lysine 206. NAD(+) is bound by residues arginine 270 and glutamine 299. Position 270-271 (270-271 (RN)) interacts with substrate.

The protein belongs to the NAD-dependent glycerol-3-phosphate dehydrogenase family. As to quaternary structure, homodimer.

Its subcellular location is the cytoplasm. The catalysed reaction is sn-glycerol 3-phosphate + NAD(+) = dihydroxyacetone phosphate + NADH + H(+). It functions in the pathway phospholipid metabolism; alpha-glycerophosphate cycle. This chain is Glycerol-3-phosphate dehydrogenase [NAD(+)], cytoplasmic (Gpdh1), found in Drosophila kanekoi (Fruit fly).